The following is a 597-amino-acid chain: ATP-dependent lipid A-core flippase (597 aa).

6 helical membrane passes run 26 to 46 (LWPY…AMAV), 76 to 96 (WFVP…QYAS), 138 to 158 (AIVF…VTLV), 164 to 184 (VVFL…IVAV), 263 to 283 (QPLT…IAVV), and 292 to 312 (VGGF…LKHL). The ABC transmembrane type-1 domain occupies 38-321 (IGAIVAMAVS…LMDVNQPLQR (284 aa)). Residues 353-590 (VEFRDVSFVY…DGLYAHLHRI (238 aa)) form the ABC transporter domain. 390 to 397 (GPSGSGKT) contacts ATP.

The protein belongs to the ABC transporter superfamily. Lipid exporter (TC 3.A.1.106) family. In terms of assembly, homodimer.

The protein resides in the cell inner membrane. It carries out the reaction ATP + H2O + lipid A-core oligosaccharideSide 1 = ADP + phosphate + lipid A-core oligosaccharideSide 2.. Functionally, involved in lipopolysaccharide (LPS) biosynthesis. Translocates lipid A-core from the inner to the outer leaflet of the inner membrane. Transmembrane domains (TMD) form a pore in the inner membrane and the ATP-binding domain (NBD) is responsible for energy generation. The chain is ATP-dependent lipid A-core flippase from Paraburkholderia xenovorans (strain LB400).